The sequence spans 385 residues: Lipid-A-disaccharide synthase (385 aa).

The protein belongs to the LpxB family.

It carries out the reaction 2-N,3-O-bis[(3R)-3-hydroxytetradecanoyl]-alpha-D-glucosaminyl 1-phosphate + UDP-2-N,3-O-bis[(3R)-3-hydroxytetradecanoyl]-alpha-D-glucosamine = lipid A disaccharide (E. coli) + UDP + H(+). The catalysed reaction is a lipid X + a UDP-2-N,3-O-bis[(3R)-3-hydroxyacyl]-alpha-D-glucosamine = a lipid A disaccharide + UDP + H(+). It participates in glycolipid biosynthesis; lipid IV(A) biosynthesis; lipid IV(A) from (3R)-3-hydroxytetradecanoyl-[acyl-carrier-protein] and UDP-N-acetyl-alpha-D-glucosamine: step 5/6. Functionally, condensation of UDP-2,3-diacylglucosamine and 2,3-diacylglucosamine-1-phosphate to form lipid A disaccharide, a precursor of lipid A, a phosphorylated glycolipid that anchors the lipopolysaccharide to the outer membrane of the cell. The sequence is that of Lipid-A-disaccharide synthase from Wigglesworthia glossinidia brevipalpis.